We begin with the raw amino-acid sequence, 51 residues long: MFKYVGEMLDRGLLLAIAFFVVYRAVLFCCARQRQQRQQLPSTADLQLDAM.

The chain crosses the membrane as a helical span at residues 11–28; it reads RGLLLAIAFFVVYRAVLF.

Belongs to the arteriviridae ORF5a protein family. In terms of assembly, interacts with GP2b and GP4.

Its subcellular location is the virion. It localises to the host cell membrane. Functionally, minor virion component that plays an essential role in virus infectivity. The sequence is that of Structural protein ORF5a from Porcine reproductive and respiratory syndrome virus (strain VR-2332) (PRRSV).